A 973-amino-acid polypeptide reads, in one-letter code: MAARWSSENVVVEFRDAQATAMSVDCLGQHAVLSGRRFLYIVNLDAPNEGHRKISRQSKWDIGAVQWNPHDSYAYYFAASSNQRVDLYKWKEGNGEVCTSLQGHTRVISDLDWSVFEPDLLVTSSVDTYIYIWDIKDTRKPTVSLSAVAGASQVKWNKKNANCLATSHDGDVRIWDKRKPSTAVEYLAAHLSKIHGLDWHPDNEYTLATSSQDNSVRFWDYRQPRKYLNILPCQVPVWKARYTPFSNGLVTVMVPQLRRENSLLLWNVFDLNTPVHTFVGHDDVVLEFQWRKQKEGSKDYQLVTWSRDQTLRMWRIDSQLQRLCANDILDGVDDLIDGISLLPEPDKALQPQDSEPQHSSGHGDEEALKEDFLNDLLVGKKTDQLGLPQTLQQEFSLINVQIRNVNVEMDAVNRSCTVSVHCGNHRVRMLVMFPVQYPNNAAPSFQFINPTSITASMKAKLLKILKDTSLQKVKRNQSCLEPCLRQLVSWLESVVNQEDSTSSNPYALPNSVTTPLPTFARVSNAYGSYQDSNIPFPRTSGARFCGAGYLVYFTRPMTMHRAVSPTEPTPRSLSALSAYHSGLITPMKIRTETPGNLRLYSGSPTRSEKEQVSISSFYYKERKSRRWKSKREGTDANNRPIKAAGKVIIQDISCLLPVHKLLGELYILNVNNIQETCQKNAASAMAVGRRDLVQVWSLAMVATDLCLGPKSDPDLEIPWAQHPFGRQLLESLLAHYSQLHDVQTLAMLCSVFEAQSRLQGCPNSYGPFPQRASNLASHSRYPSFTSSGSCSSMSDPGLGTGGWSIANKDTEQTSTPWCESSPDEFRYSNLMYPDHREREKDQHEKNKRLLDPANTQQFDDFKKCYGEILYRWGLREKRAEVLKFVSSPPDPHKGIEFGVYCSHCRSEARGTQCAICKGFTFQCAICHVAVRGSSNFCLTCGHGGHTSHMMEWFRTQEVCPTGCGCHCLLESTF.

6 WD repeats span residues 57–98 (QSKW…GEVC), 103–143 (GHTR…KPTV), 146–185 (SAVA…TAVE), 189–229 (AHLS…KYLN), 232–276 (PCQV…TPVH), and 280–324 (GHDD…QRLC). Positions 346–365 (DKALQPQDSEPQHSSGHGDE) are disordered. Residues 351 to 360 (PQDSEPQHSS) are compositionally biased toward polar residues. The RWD domain occupies 393–494 (QEFSLINVQI…RQLVSWLESV (102 aa)). A C4-type zinc finger spans residues 900-920 (YCSHCRSEARGTQCAICKGFT). Zn(2+) contacts are provided by cysteine 901, cysteine 904, cysteine 913, cysteine 916, cysteine 926, cysteine 937, histidine 942, histidine 945, histidine 948, cysteine 959, cysteine 963, cysteine 965, and cysteine 967. The segment at 921–970 (FQCAICHVAVRGSSNFCLTCGHGGHTSHMMEWFRTQEVCPTGCGCHCLLE) adopts an RING-type; atypical zinc-finger fold.

The protein belongs to the WD repeat WDR59 family. In terms of assembly, component of the GATOR2 subcomplex, composed of MIOS, SEC13, SEH1L, WDR24 and WDR59. The GATOR2 complex interacts with CASTOR1 and CASTOR2; the interaction is negatively regulated by arginine. The GATOR2 complex interacts with SESN1, SESN2 and SESN3; the interaction is negatively regulated by amino acids. Interacts with DDB1-CUL4A/B E3 ligase complexes.

The protein localises to the lysosome membrane. With respect to regulation, the GATOR2 complex is negatively regulated by the upstream amino acid sensors CASTOR1 and SESN2, which sequester the GATOR2 complex in absence of amino acids. In the presence of abundant amino acids, GATOR2 is released from CASTOR1 and SESN2 and activated. Its function is as follows. As a component of the GATOR2 complex, functions as an activator of the amino acid-sensing branch of the mTORC1 signaling pathway. The GATOR2 complex indirectly activates mTORC1 through the inhibition of the GATOR1 subcomplex. GATOR2 probably acts as an E3 ubiquitin-protein ligase toward GATOR1. In the presence of abundant amino acids, the GATOR2 complex mediates ubiquitination of the NPRL2 core component of the GATOR1 complex, leading to GATOR1 inactivation. In the absence of amino acids, GATOR2 is inhibited, activating the GATOR1 complex. In Gallus gallus (Chicken), this protein is GATOR2 complex protein WDR59.